The following is a 356-amino-acid chain: S-adenosylmethionine:tRNA ribosyltransferase-isomerase (356 aa).

Belongs to the QueA family. As to quaternary structure, monomer.

It is found in the cytoplasm. It catalyses the reaction 7-aminomethyl-7-carbaguanosine(34) in tRNA + S-adenosyl-L-methionine = epoxyqueuosine(34) in tRNA + adenine + L-methionine + 2 H(+). Its pathway is tRNA modification; tRNA-queuosine biosynthesis. In terms of biological role, transfers and isomerizes the ribose moiety from AdoMet to the 7-aminomethyl group of 7-deazaguanine (preQ1-tRNA) to give epoxyqueuosine (oQ-tRNA). The chain is S-adenosylmethionine:tRNA ribosyltransferase-isomerase from Escherichia coli O1:K1 / APEC.